The sequence spans 27 residues: Antimicrobial peptide 1 (27 aa).

In terms of tissue distribution, expressed by the skin glands.

It is found in the secreted. Functionally, has very weak antimicrobial activity against Gram-positive bacterium S.aureus and Gram-negative bacterium E.coli and stronger activity against yeast C.albicans. Enhances the antibacterial activity of XT3. Has hemolytic activity against human red blood cells. This chain is Antimicrobial peptide 1, found in Xenopus tropicalis (Western clawed frog).